Reading from the N-terminus, the 1166-residue chain is MINRDNKKAITKKGMISNRLNKFSIRKYTVGTASILVGTTLIFGLGNQEAKAAENTSTENAKQDDATTSDNKEVVSETENNSTTENNSTNPIKKETNTDSQPEAKKESTSSSTQKQQNNVTATTETKPQNIEKENVKPSTDKTATEDTSVILEEKKAPNNTNNDVTTKPSTSEPSTSEIQTKPTTPQESTNIENSQPQPTPSKVDNQVTDATNPKEPVNVSKEELKKNPEKLKELVRNDSNTDHSTKPVATAPTSVAPKRVNAKMRFAVAQPAAVASNNVNDLIKVTKQTIKVGDGKDNVAAAHDGKDIEYDTEFTIDNKVKKGDTMTINYDKNVIPSDLTDKNDPIDITDPSGEVIAKGTFDKATKQITYTFTDYVDKYEDIKSRLTLYSYIDKKTVPNETSLNLTFATAGKETSQNVTVDYQDPMVHGDSNIQSIFTKLDEDKQTIEQQIYVNPLKKSATNTKVDIAGSQVDDYGNIKLGNGSTIIDQNTEIKVYKVNSDQQLPQSNRIYDFSQYEDVTSQFDNKKSFSNNVATLDFGDINSAYIIKVVSKYTPTSDGELDIAQGTSMRTTDKYGYYNYAGYSNFIVTSNDTGGGDGTVKPEEKLYKIGDYVWEDVDKDGVQGTDSKEKPMANVLVTLTYPDGTTKSVRTDANGHYEFGGLKDGETYTVKFETPTGYLPTKVNGTTDGEKDSNGSSVTVKINGKDDMSLDTGFYKEPKYNLGDYVWEDTNKDGIQDANEPGIKDVKVTLKDSTGKVIGTTTTDASGKYKFTDLDNGNYTVEFETPAGYTPTVKNTTADDKDSNGLTTTGVIKDADNMTLDRGFYKTPKYSLGDYVWYDSNKDGKQDSTEKGIKDVTVTLQNEKGEVIGTTKTDENGKYRFDNLDSGKYKVIFEKPAGLTQTVTNTTEDDKDADGGEVDVTITDHDDFTLDNGYFEEDTSDSDSDSDSDSDSDSDSDSDSDSDSDSDSDSDSDSDSDSDSDSDSDSDSDSDSDSDSDSDSDSDSDSDSDSDSDSDSDSDSDSDSDSDSDSDSDSDSDSDSDSDSDSDSDSDSDSDSDSDSDSDSDSDSDSDSDSDSDSDSDSDSDSDSDSDSDSDSDSDSDSDSDAGKHTPVKPMSTTKDHHNKAKALPETGSENNGSNNATLFGGLFAALGSLLLFGRRKKQNK.

Residues 1–52 form the signal peptide; the sequence is MINRDNKKAITKKGMISNRLNKFSIRKYTVGTASILVGTTLIFGLGNQEAKA. The short motif at 23-34 is the YSIRK-G/S signaling motif element; that stretch reads FSIRKYTVGTAS. Residues 53-606 form a ligand binding A region region; it reads AENTSTENAK…GDGTVKPEEK (554 aa). The tract at residues 54 to 253 is disordered; sequence ENTSTENAKQ…HSTKPVATAP (200 aa). The segment covering 61 to 75 has biased composition (basic and acidic residues); that stretch reads AKQDDATTSDNKEVV. A compositionally biased stretch (low complexity) spans 77–90; the sequence is ETENNSTTENNSTN. The span at 92-108 shows a compositional bias: basic and acidic residues; it reads IKKETNTDSQPEAKKES. Positions 118–129 are enriched in polar residues; sequence NNVTATTETKPQ. Over residues 130 to 145 the composition is skewed to basic and acidic residues; the sequence is NIEKENVKPSTDKTAT. Low complexity predominate over residues 166–178; the sequence is TTKPSTSEPSTSE. The segment covering 179 to 212 has biased composition (polar residues); that stretch reads IQTKPTTPQESTNIENSQPQPTPSKVDNQVTDAT. The segment covering 221 to 246 has biased composition (basic and acidic residues); sequence SKEELKKNPEKLKELVRNDSNTDHST. CNA-B domains follow at residues 607–719, 720–829, and 830–940; these read LYKI…YKEP, KYNL…YKTP, and KYSL…EEDT. The segment at 904–1141 is disordered; sequence VTNTTEDDKD…TGSENNGSNN (238 aa). 2 stretches are compositionally biased toward acidic residues: residues 908–918 and 935–1105; these read TEDDKDADGGE and YFEE…DSDS. Residues 1129–1133 carry the LPXTG sorting signal motif; that stretch reads LPETG. Thr1132 is modified (pentaglycyl murein peptidoglycan amidated threonine). Residues 1133-1166 constitute a propeptide, removed by sortase; the sequence is GSENNGSNNATLFGGLFAALGSLLLFGRRKKQNK.

It belongs to the serine-aspartate repeat-containing protein (SDr) family. As to quaternary structure, interacts with host complement factor H/CFAH (via C-terminus). Interacts with host complement regulator C4BPA.

It is found in the secreted. It localises to the cell wall. In terms of biological role, cell surface-associated calcium-binding protein which plays an important role in adhesion and pathogenesis. Contributes to the resistance to killing by innate immune components in blood and thus attenuates bacterial clearance by interacting with host complement factor H/CFAH and modulating its activity. Also inhibits bacterial opsonization and killing by interacting with host complement regulator C4BPA and thus inhibiting classical complement pathway activation. This chain is Serine-aspartate repeat-containing protein E (sdrE), found in Staphylococcus aureus (strain COL).